The chain runs to 164 residues: Protein HIT1 (164 aa).

Zn(2+) is bound by residues Cys-8, Cys-11, Cys-28, and Cys-32. Residues 8–49 (CGICRGVDGKYKCPKCGVRYCSLKCYKDAAKHVHKESEQPRA) form an HIT-type; degenerate zinc finger.

The polypeptide is Protein HIT1 (HIT1) (Saccharomyces cerevisiae (strain ATCC 204508 / S288c) (Baker's yeast)).